We begin with the raw amino-acid sequence, 389 residues long: Glutamate 5-kinase (389 aa).

ATP is bound at residue K16. Substrate is bound by residues S56, D143, and N155. 175–176 (SD) contacts ATP. A PUA domain is found at 281–358 (AGELHVDDGA…AEIETILGYP (78 aa)).

It belongs to the glutamate 5-kinase family.

The protein localises to the cytoplasm. It catalyses the reaction L-glutamate + ATP = L-glutamyl 5-phosphate + ADP. The protein operates within amino-acid biosynthesis; L-proline biosynthesis; L-glutamate 5-semialdehyde from L-glutamate: step 1/2. In terms of biological role, catalyzes the transfer of a phosphate group to glutamate to form L-glutamate 5-phosphate. This is Glutamate 5-kinase from Rhizobium johnstonii (strain DSM 114642 / LMG 32736 / 3841) (Rhizobium leguminosarum bv. viciae).